A 54-amino-acid polypeptide reads, in one-letter code: uncharacterized protein (54 aa).

A disordered region spans residues 34-54 (NNREKQKSGKLRELRRGFKTF).

This is an uncharacterized protein from Acidianus two-tailed virus (ATV).